We begin with the raw amino-acid sequence, 502 residues long: Cytochrome P450 3A40 (502 aa).

A heme-binding site is contributed by Cys443.

Belongs to the cytochrome P450 family. Requires heme as cofactor.

Its subcellular location is the endoplasmic reticulum membrane. The protein resides in the microsome membrane. The enzyme catalyses an organic molecule + reduced [NADPH--hemoprotein reductase] + O2 = an alcohol + oxidized [NADPH--hemoprotein reductase] + H2O + H(+). The sequence is that of Cytochrome P450 3A40 (cyp3a40) from Oryzias latipes (Japanese rice fish).